Reading from the N-terminus, the 971-residue chain is MDLDPHAGVQVGMRVVRGMDWKWGQQDGGEGGVGTVVELGRHGSPSTPDRTVVVQWDQGTRTNYRAGYQGAHDLLLYDNAQIGIRHPNIICDCCKKHGLRGMRWKCRVCFDYDLCTQCYMHNKHDLTHAFERYETSHSRPVTLSPRQGLPRIPLRGIFQGAKVVRGPDWEWGSQDGGEGKTGRVVDIRGWDVETGRSVASVTWADGTTNVYRVGHKGKVDLKCVGEAAGGFYYKEHLPKLGKPAELQRRVSADGQPFQRGDKVKCLLDTDVLRDMQEGHGGWNPRMAEFIGQMGTVHRITDRGDVRVQFNHETRWTFHPGALTKHNSFWVGDVVRVIDDLDTVKRLQAGHGEWTDDMAPALGRVGKVVKVFGDGNLRVAVGGQRWTFSPACLVACRPEEDANLGVAERARENKSAASVPVAGSLSVALDKLRTQKSDPEHPGRLVVEAALGNVARALDLLRRHPEQAGFHPAVDTKNQGRTALQVAAYLGQVELVRLLLQARASVDLLDEEGNTALHYTAMGNQPEATRLLLSAGCGVDAQNGTRSTALHVAVQRGFLEVVKILCEHGCDVNLPDAHADTPLHSAISAGAGASSIVEVLTEVPGIDVTATNSQGFTLLHHASLKGHVLAVRKILARARQLVDAKKEDGFTALHLAALNNHREVAQVLIREGRCDVNVRNRKLQSPLHLAVQQAHLGLVPLLVDAGCNVNTEDEEGDTALHVALQRHQLLPLVADRAGGDPGPLQLLSRLQASGLPGSTELTVGAAVACFLALEGADVSYANHRGRSPLDLATEGRVLKALQGCAQRFRERQAGGGGGVPPGPRHVLSTPNTVTNLHVSGTAGPEAAECLVCSELALLVLFSPCQHRTVCEECARRMKKCIRCQVIISKKLRPDGSEVVNAIQVPGPPRQLVEELQSRYRQMEERITCPICIDSHIRLVFQCGHGACAPCGAALNACPICRQPIRDRIQIFV.

Residues 1 to 80 (MDLDPHAGVQ…AHDLLLYDNA (80 aa)) form the MIB/HERC2 1 domain. The ZZ-type zinc-finger motif lies at 86–138 (HPNIICDCCKKHGLRGMRWKCRVCFDYDLCTQCYMHNKHDLTHAFERYETSHS). Positions 91, 94, 106, 109, 115, 118, 124, and 128 each coordinate Zn(2+). Positions 149 to 227 (LPRIPLRGIF…KVDLKCVGEA (79 aa)) constitute an MIB/HERC2 2 domain. Serine 251 carries the post-translational modification Phosphoserine. 9 ANK repeats span residues 478 to 507 (QGRT…SVDL), 511 to 540 (EGNT…GVDA), 544 to 573 (TRST…DVNL), 577 to 609 (HADT…DVTA), 613 to 642 (QGFT…QLVD), 647 to 677 (DGFT…DVNV), 681 to 710 (KLQS…NVNT), 714 to 742 (EGDT…DPGP), and 783 to 812 (RGRS…ERQA). 2 consecutive RING-type zinc fingers follow at residues 848-883 (CLVC…IRCQ) and 927-960 (CPIC…PICR).

In terms of assembly, interacts with actin monomer. In terms of processing, ubiquitinated. Possibly via autoubiquitination.

It localises to the cytoplasm. The protein resides in the endosome. It catalyses the reaction S-ubiquitinyl-[E2 ubiquitin-conjugating enzyme]-L-cysteine + [acceptor protein]-L-lysine = [E2 ubiquitin-conjugating enzyme]-L-cysteine + N(6)-ubiquitinyl-[acceptor protein]-L-lysine.. The protein operates within protein modification; protein ubiquitination. In terms of biological role, E3 ubiquitin-protein ligase that mediates ubiquitination of Delta receptors, which act as ligands of Notch proteins. Positively regulates the Delta-mediated Notch signaling by ubiquitinating the intracellular domain of Delta, leading to endocytosis of Delta receptors. This is E3 ubiquitin-protein ligase MIB2 (Mib2) from Rattus norvegicus (Rat).